Reading from the N-terminus, the 720-residue chain is Iron-sulfur clusters transporter ATM1, mitochondrial (720 aa).

The transit peptide at 1-36 directs the protein to the mitochondrion; sequence MIMFRSLSVTPVWKAGLSLSHRSIPINSRLSSVRNY. Residues 37-129 lie on the Mitochondrial matrix side of the membrane; that stretch reads ISIGCANKTG…PSGDNKVKIR (93 aa). Positions 64–77 are enriched in polar residues; it reads RFNSSSNGNGTDKN. The segment at 64–102 is disordered; that stretch reads RFNSSSNGNGTDKNASVAPKTEVKKIVPPKPSTNGKSKT. The helical transmembrane segment at 130-151 threads the bilayer; that stretch reads VLIALALLIGAKLLNVQVPFFF. The ABC transmembrane type-1 domain maps to 130 to 421; that stretch reads VLIALALLIG…LGSVYRELKQ (292 aa). Residues 152–175 are Mitochondrial intermembrane-facing; sequence KQTIDSMNIEWGPDVATVLPVAIT. The helical transmembrane segment at 176–199 threads the bilayer; it reads MTILSYGAARFGAVMFGELRNAVF. The Mitochondrial matrix segment spans residues 200–248; sequence AKVAQNAIRKVSLQTFQHLMKLDLGWHLSRQTGGLTRAMDRGTKGISYV. Residues 249–272 traverse the membrane as a helical segment; the sequence is LSAMVFHMIPITFEISVVCGILTY. Gln273 is a topological domain (mitochondrial intermembrane). Residues 274–294 traverse the membrane as a helical segment; the sequence is FGSSFAAMTFVTMLLYSFFTF. Topologically, residues 295 to 360 are mitochondrial matrix; that stretch reads KTTAWRTEFR…SQIKVAQSLA (66 aa). Glutathione is bound by residues 300-304 and 363-366; these read RTEFR and NAGQ. Residues 361–379 form a helical membrane-spanning segment; that stretch reads FLNAGQNFIFTSALTAMMY. At 380–394 the chain is on the mitochondrial intermembrane side; sequence MGASGVMEGALTVGD. A helical transmembrane segment spans residues 395–416; that stretch reads LVLINQLVFQLSVPLNFLGSVY. A glutathione-binding site is contributed by Gly413. The Mitochondrial matrix portion of the chain corresponds to 417–720; it reads RELKQSLIDM…EKEPRTSKKD (304 aa). The ABC transporter domain maps to 456–692; sequence IKFENVTFGY…PNSLYSELWN (237 aa). ATP-binding positions include Tyr465 and 489 to 500; that span reads GPSGSGKSTILR.

The protein belongs to the ABC transporter superfamily. ABCB family. Heavy Metal importer (TC 3.A.1.210) subfamily. Homodimer.

It localises to the mitochondrion inner membrane. In terms of biological role, performs an essential function in the generation of cytoplasmic iron-sulfur proteins by mediating the ATP-dependent export of Fe/S cluster precursors synthesized by NFS1 and other mitochondrial proteins. Hydrolyzes ATP. Binds glutathione and may function by transporting a glutathione-conjugated iron-sulfur compound. This chain is Iron-sulfur clusters transporter ATM1, mitochondrial, found in Kluyveromyces lactis (strain ATCC 8585 / CBS 2359 / DSM 70799 / NBRC 1267 / NRRL Y-1140 / WM37) (Yeast).